Consider the following 382-residue polypeptide: Carbamoyl phosphate synthase small chain (382 aa).

Residues 1 to 189 (MIKSALLVLE…GLPEAKSEDD (189 aa)) form a CPSase region. Serine 47, glycine 241, and glycine 243 together coordinate L-glutamine. A Glutamine amidotransferase type-1 domain is found at 193 to 380 (HVVAYDFGAK…IELIEQYRQS (188 aa)). Cysteine 269 serves as the catalytic Nucleophile. 5 residues coordinate L-glutamine: leucine 270, glutamine 273, asparagine 311, glycine 313, and phenylalanine 314. Residues histidine 353 and glutamate 355 contribute to the active site.

It belongs to the CarA family. As to quaternary structure, composed of two chains; the small (or glutamine) chain promotes the hydrolysis of glutamine to ammonia, which is used by the large (or ammonia) chain to synthesize carbamoyl phosphate. Tetramer of heterodimers (alpha,beta)4.

The catalysed reaction is hydrogencarbonate + L-glutamine + 2 ATP + H2O = carbamoyl phosphate + L-glutamate + 2 ADP + phosphate + 2 H(+). The enzyme catalyses L-glutamine + H2O = L-glutamate + NH4(+). The protein operates within amino-acid biosynthesis; L-arginine biosynthesis; carbamoyl phosphate from bicarbonate: step 1/1. It participates in pyrimidine metabolism; UMP biosynthesis via de novo pathway; (S)-dihydroorotate from bicarbonate: step 1/3. Functionally, small subunit of the glutamine-dependent carbamoyl phosphate synthetase (CPSase). CPSase catalyzes the formation of carbamoyl phosphate from the ammonia moiety of glutamine, carbonate, and phosphate donated by ATP, constituting the first step of 2 biosynthetic pathways, one leading to arginine and/or urea and the other to pyrimidine nucleotides. The small subunit (glutamine amidotransferase) binds and cleaves glutamine to supply the large subunit with the substrate ammonia. In Salmonella typhimurium (strain LT2 / SGSC1412 / ATCC 700720), this protein is Carbamoyl phosphate synthase small chain.